The chain runs to 879 residues: Beta-mannosidase (879 aa).

A signal peptide spans methionine 1–alanine 17. Residues asparagine 35 and asparagine 77 are each glycosylated (N-linked (GlcNAc...) asparagine). Cysteine 167 and cysteine 176 are oxidised to a cystine. Tryptophan 190–tryptophan 192 contacts substrate. N-linked (GlcNAc...) asparagine glycans are attached at residues asparagine 297 and asparagine 302. Asparagine 456 contacts substrate. The Proton donor role is filled by glutamate 457. 3 disulfide bridges follow: cysteine 540/cysteine 629, cysteine 732/cysteine 761, and cysteine 764/cysteine 769. Catalysis depends on glutamate 554, which acts as the Nucleophile. The N-linked (GlcNAc...) asparagine glycan is linked to asparagine 607. Asparagine 803 carries an N-linked (GlcNAc...) asparagine glycan.

This sequence belongs to the glycosyl hydrolase 2 family. Monomer. Post-translationally, the N-terminus is blocked. N-glycosylated. Detected in kidney (at protein level). Highest expression is found in thyroid tissue. The amount of transcript is significantly higher in normal tissues than in tissues affected by the disease.

The protein localises to the lysosome. It catalyses the reaction Hydrolysis of terminal, non-reducing beta-D-mannose residues in beta-D-mannosides.. Its pathway is glycan metabolism; N-glycan degradation. Exoglycosidase that cleaves the single beta-linked mannose residue from the non-reducing end of all N-linked glycoprotein oligosaccharides. This chain is Beta-mannosidase (MANBA), found in Bos taurus (Bovine).